A 121-amino-acid chain; its full sequence is Ribonuclease P protein component (121 aa).

This sequence belongs to the RnpA family. As to quaternary structure, consists of a catalytic RNA component (M1 or rnpB) and a protein subunit.

It carries out the reaction Endonucleolytic cleavage of RNA, removing 5'-extranucleotides from tRNA precursor.. RNaseP catalyzes the removal of the 5'-leader sequence from pre-tRNA to produce the mature 5'-terminus. It can also cleave other RNA substrates such as 4.5S RNA. The protein component plays an auxiliary but essential role in vivo by binding to the 5'-leader sequence and broadening the substrate specificity of the ribozyme. The sequence is that of Ribonuclease P protein component from Erythrobacter litoralis (strain HTCC2594).